The primary structure comprises 396 residues: Elongation factor Tu 2 (396 aa).

Positions 10–206 (KPHVNIGTIG…AVDEYIPTPE (197 aa)) constitute a tr-type G domain. Residues 19–26 (GHVDHGKT) are G1. GTP is bound at residue 19-26 (GHVDHGKT). T26 lines the Mg(2+) pocket. Residues 60–64 (GITIN) are G2. Residues 81–84 (DCPG) are G3. Residues 81-85 (DCPGH) and 136-139 (NKVD) each bind GTP. A G4 region spans residues 136–139 (NKVD). Residues 174-176 (SAL) are G5.

It belongs to the TRAFAC class translation factor GTPase superfamily. Classic translation factor GTPase family. EF-Tu/EF-1A subfamily. As to quaternary structure, monomer.

The protein resides in the cytoplasm. It catalyses the reaction GTP + H2O = GDP + phosphate + H(+). Functionally, GTP hydrolase that promotes the GTP-dependent binding of aminoacyl-tRNA to the A-site of ribosomes during protein biosynthesis. The polypeptide is Elongation factor Tu 2 (Hyphomonas neptunium (strain ATCC 15444)).